Consider the following 309-residue polypeptide: Dihydroorotate dehydrogenase B (NAD(+)), catalytic subunit (309 aa).

FMN-binding positions include Ser21 and 45 to 46; that span reads KA. Substrate is bound by residues Lys45 and 69 to 73; that span reads NAIGL. FMN is bound by residues Asn99 and Asn127. Asn127 lines the substrate pocket. The active-site Nucleophile is the Cys130. Positions 165 and 191 each coordinate FMN. 192-193 lines the substrate pocket; sequence NT. FMN-binding positions include Gly217, 243 to 244, and 265 to 266; these read GG and GT.

The protein belongs to the dihydroorotate dehydrogenase family. Type 1 subfamily. In terms of assembly, heterotetramer of 2 PyrK and 2 PyrD type B subunits. Requires FMN as cofactor.

It is found in the cytoplasm. The catalysed reaction is (S)-dihydroorotate + NAD(+) = orotate + NADH + H(+). The protein operates within pyrimidine metabolism; UMP biosynthesis via de novo pathway; orotate from (S)-dihydroorotate (NAD(+) route): step 1/1. Catalyzes the conversion of dihydroorotate to orotate with NAD(+) as electron acceptor. In Bacillus thuringiensis (strain Al Hakam), this protein is Dihydroorotate dehydrogenase B (NAD(+)), catalytic subunit (pyrD).